Reading from the N-terminus, the 252-residue chain is 5-oxoprolinase subunit A (252 aa).

This sequence belongs to the LamB/PxpA family. Forms a complex composed of PxpA, PxpB and PxpC.

It carries out the reaction 5-oxo-L-proline + ATP + 2 H2O = L-glutamate + ADP + phosphate + H(+). In terms of biological role, catalyzes the cleavage of 5-oxoproline to form L-glutamate coupled to the hydrolysis of ATP to ADP and inorganic phosphate. The protein is 5-oxoprolinase subunit A of Mycolicibacterium paratuberculosis (strain ATCC BAA-968 / K-10) (Mycobacterium paratuberculosis).